A 486-amino-acid chain; its full sequence is Cytosol aminopeptidase (486 aa).

2 residues coordinate Zn(2+): K249 and D254. The active site involves K261. D272, D331, and E333 together coordinate Zn(2+). The active site involves R335.

Belongs to the peptidase M17 family. Homohexamer. Zn(2+) serves as cofactor.

The protein resides in the cytoplasm. The catalysed reaction is Release of an N-terminal amino acid, Xaa-|-Yaa-, in which Xaa is preferably Leu, but may be other amino acids including Pro although not Arg or Lys, and Yaa may be Pro. Amino acid amides and methyl esters are also readily hydrolyzed, but rates on arylamides are exceedingly low.. It carries out the reaction Release of N-terminal proline from a peptide.. Functionally, presumably involved in the processing and regular turnover of intracellular proteins. Catalyzes the removal of unsubstituted N-terminal amino acids from various peptides. The protein is Cytosol aminopeptidase of Encephalitozoon cuniculi (strain GB-M1) (Microsporidian parasite).